Consider the following 714-residue polypeptide: Protein BLISTER (714 aa).

Disordered regions lie at residues 1–113, 219–261, 288–325, and 519–576; these read MASA…VDFS, SSYL…KRSR, VTSS…ASDY, and MVQK…SSNT. Residues 8 to 33 show a composition bias toward basic and acidic residues; that stretch reads RRQEDVEAGRRKLEQFRKRKAAEKAK. Composition is skewed to polar residues over residues 36–50 and 58–74; these read SQNT…QSVI and SISN…TSNE. Basic and acidic residues predominate over residues 92 to 102; it reads DGSKERSRQDD. Polar residues-rich tracts occupy residues 219–253, 288–297, 313–322, and 519–561; these read SSYL…SAKS, VTSSGSQLSG, NGPSSLTSGA, and MVQK…SSNQ. Positions 356-525 form a coiled coil; sequence NDDFTALEQH…LQTMVQKASS (170 aa). Low complexity predominate over residues 562 to 576; it reads ETDSTTLLESDSSNT.

As to quaternary structure, interacts with CLF. Expressed in root tips, emerging lateral roots, shoot apical meristem (SAM), vasculature of cotyledons, leaves, sepals and carpels.

It localises to the nucleus. Its subcellular location is the cytoplasm. In terms of biological role, is required for normal leaf, flower and seed development and controls cotyledon and leaf patterning by inhibiting premature differentiation. Regulates the expression of a subset of PcG target genes. Is required for the repression of the floral specific genes PI, SEP2, and SEP3, but also for the activation of FLC. Involved in response to cold. Involved in the regulation of COR15A, COR15B, BAM3 and AMY3 transcripts, and ascorbate levels in response to prolonged chilling temperatures. This chain is Protein BLISTER, found in Arabidopsis thaliana (Mouse-ear cress).